The primary structure comprises 255 residues: Tryptophan synthase alpha chain (255 aa).

Catalysis depends on proton acceptor residues Glu42 and Asp53.

This sequence belongs to the TrpA family. Tetramer of two alpha and two beta chains.

The catalysed reaction is (1S,2R)-1-C-(indol-3-yl)glycerol 3-phosphate + L-serine = D-glyceraldehyde 3-phosphate + L-tryptophan + H2O. It participates in amino-acid biosynthesis; L-tryptophan biosynthesis; L-tryptophan from chorismate: step 5/5. The alpha subunit is responsible for the aldol cleavage of indoleglycerol phosphate to indole and glyceraldehyde 3-phosphate. The chain is Tryptophan synthase alpha chain from Wolinella succinogenes (strain ATCC 29543 / DSM 1740 / CCUG 13145 / JCM 31913 / LMG 7466 / NCTC 11488 / FDC 602W) (Vibrio succinogenes).